The following is a 185-amino-acid chain: MINDILNEADGKMDKSVEATREEFAAIRAGRVNPSMFNKIVVDYYGSPTPLQQLASFTAPEARIILIAPYDQGAMHNILKAIRDSDLGVNPADDGKVIRCVFPELTEERRKEYIKISRHKAEEGRVAVRNLRRTAKQHLERLEKDGEVGQDDLTGAEKRLDGLTKKHTDAIDEMLKHKEAELLEV.

The protein belongs to the RRF family.

It localises to the cytoplasm. Its function is as follows. Responsible for the release of ribosomes from messenger RNA at the termination of protein biosynthesis. May increase the efficiency of translation by recycling ribosomes from one round of translation to another. This is Ribosome-recycling factor from Nocardioides sp. (strain ATCC BAA-499 / JS614).